The following is a 120-amino-acid chain: Xibalbin-1 (120 aa).

Residues 1–21 form the signal peptide; the sequence is MISKILIAACALLLISHLVLA. The propeptide occupies 22-63; the sequence is VPYLEDGLNSLHNRTGESDETRGYTIQLLKEMPEDDAVEDYS. Disulfide bonds link C79-C94, C86-C99, C93-C110, and C101-C108.

This sequence belongs to the xibalbin-1 family. Expressed by the venom gland. Not found in the whole body.

It localises to the secreted. Its function is as follows. Probable neurotoxin. Strongly inhibits voltage-gated potassium channels (Kv1.1/KCNA1, Kv1.2/KCNA2, Kv1.3/KCNA3, and Kv1.6/KCNA6, with the highest toxicity against Kv1.6 (74% inhibition at 1 uM)) and mildly inhibits sodium channels (Nav1.2/SCN2A, Nav1.4/SCN4A, Nav1.5/SCN5A, Nav1.6/SCN8A, and BgNav). Induces activation of protein kinase A type II (PKA-II) and MAP kinase Erk1/2 in primary nociceptive and non-nociceptive sensory neurons. Does not show cytotoxic activity. Does not have an impact on Ca2+, cAMP, and NO signaling in the cell types analyzed. Does not interfere with the adhesion of leukocytes to endothelial cells. This is Xibalbin-1 from Xibalbanus tulumensis (Blind cave remipede).